A 456-amino-acid chain; its full sequence is Argininosuccinate lyase (456 aa).

The protein belongs to the lyase 1 family. Argininosuccinate lyase subfamily.

Its subcellular location is the cytoplasm. It carries out the reaction 2-(N(omega)-L-arginino)succinate = fumarate + L-arginine. The protein operates within amino-acid biosynthesis; L-arginine biosynthesis; L-arginine from L-ornithine and carbamoyl phosphate: step 3/3. In Listeria innocua serovar 6a (strain ATCC BAA-680 / CLIP 11262), this protein is Argininosuccinate lyase.